Consider the following 457-residue polypeptide: Hepatocyte nuclear factor 3-beta (457 aa).

A transactivation domain 1 region spans residues 14–93 (DWSSYYAEPE…AGAMAGMGGS (80 aa)). The Nuclear localization signal signature appears at 106–113 (LSPSLSPL). Thr156 carries the phosphothreonine modification. Positions 159–252 (KPPYSYISLI…FENGCYLRRQ (94 aa)) form a DNA-binding region, fork-head. Phosphoserine occurs at positions 212 and 283. Residues 280–292 (AQASQAQLGEAAG) show a composition bias toward low complexity. The interval 280-365 (AQASQAQLGE…PGLPPEAHLK (86 aa)) is disordered. Over residues 298-310 (PAGTESPHSSASP) the composition is skewed to polar residues. Phosphothreonine is present on Thr301. A phosphoserine mark is found at Ser303, Ser306, Ser307, and Ser309. Low complexity predominate over residues 339-352 (PGQQQQAAAHLLGP). Residues 361–457 (EAHLKPEHHY…VYSRPIMNSS (97 aa)) form a transactivation domain 2 region. 2 positions are modified to phosphoserine: Ser436 and Ser457.

As to quaternary structure, binds DNA as a monomer. Binds TLE1. Interacts with FOXA1 and FOXA3. Interacts with PRKDC. Interacts with AKT1. Interacts with TET1; this interaction may recruit TET1 to specific genomic loci to mediate their demethylation. Post-translationally, phosphorylation on Thr-156 abolishes binding to target promoters and subsequent transcription activation upon insulin stimulation.

The protein resides in the nucleus. Its subcellular location is the cytoplasm. In terms of biological role, transcription factor that is involved in embryonic development, establishment of tissue-specific gene expression and regulation of gene expression in differentiated tissues. Is thought to act as a 'pioneer' factor opening the compacted chromatin for other proteins through interactions with nucleosomal core histones and thereby replacing linker histones at target enhancer and/or promoter sites. Binds DNA with the consensus sequence 5'-[AC]A[AT]T[AG]TT[GT][AG][CT]T[CT]-3'. In embryonic development is required for notochord formation. Involved in the development of multiple endoderm-derived organ systems such as the liver, pancreas and lungs; FOXA1 and FOXA2 seem to have at least in part redundant roles. Originally described as a transcription activator for a number of liver genes such as AFP, albumin, tyrosine aminotransferase, PEPCK, etc. Interacts with the cis-acting regulatory regions of these genes. Involved in glucose homeostasis; regulates the expression of genes important for glucose sensing in pancreatic beta-cells and glucose homeostasis. Involved in regulation of fat metabolism. Binds to fibrinogen beta promoter and is involved in IL6-induced fibrinogen beta transcriptional activation. The chain is Hepatocyte nuclear factor 3-beta (FOXA2) from Homo sapiens (Human).